The primary structure comprises 415 residues: MSVHAPAAPDLRTEVHDAARRARVASRTLATLSTETKNRALRAAADRVLMDAHLIIAGNERDLEKARAAGTPDAMLDRLALNPQRIDGVAAGLRQVASLPDPVGEVLRGNTLVNGLQLRQQRVPLGVVGIVYEGRPNVTVDAFGLTLKSGNAVLLRGSSSAAHSNAALVDSLRAALVAEGLDANAVQLLPSHDRASVTHLIQARGLVDVVIPRGGAGLIDAVVRDAQVPTIETGVGNCHVYVHSAADLDMAETILLNAKTRRPSVCNAAESVLIDAAIAEEAVPRLTKALQDAGVTVHADPTEEELRAEFLSMDIALAVVDGVDAAIAHVNEYGSGHTEAIVTADLAAAQRFTERVDAAAVMVNASTAFTDGEQFGFGAEIGISTQKLHARGPMGLPELTSTKWIVWGDGHTRPA.

It belongs to the gamma-glutamyl phosphate reductase family.

Its subcellular location is the cytoplasm. It carries out the reaction L-glutamate 5-semialdehyde + phosphate + NADP(+) = L-glutamyl 5-phosphate + NADPH + H(+). Its pathway is amino-acid biosynthesis; L-proline biosynthesis; L-glutamate 5-semialdehyde from L-glutamate: step 2/2. Catalyzes the NADPH-dependent reduction of L-glutamate 5-phosphate into L-glutamate 5-semialdehyde and phosphate. The product spontaneously undergoes cyclization to form 1-pyrroline-5-carboxylate. The protein is Gamma-glutamyl phosphate reductase of Mycobacterium sp. (strain JLS).